The chain runs to 164 residues: Phosphopantetheine adenylyltransferase (164 aa).

Thr14 is a substrate binding site. ATP contacts are provided by residues 14 to 15 (TF) and His22. Substrate is bound by residues Lys46, Leu78, and Arg92. ATP-binding positions include 93 to 95 (GLR), Glu103, and 128 to 134 (HAFISST).

Belongs to the bacterial CoaD family. In terms of assembly, homohexamer. Requires Mg(2+) as cofactor.

Its subcellular location is the cytoplasm. It catalyses the reaction (R)-4'-phosphopantetheine + ATP + H(+) = 3'-dephospho-CoA + diphosphate. It participates in cofactor biosynthesis; coenzyme A biosynthesis; CoA from (R)-pantothenate: step 4/5. In terms of biological role, reversibly transfers an adenylyl group from ATP to 4'-phosphopantetheine, yielding dephospho-CoA (dPCoA) and pyrophosphate. The sequence is that of Phosphopantetheine adenylyltransferase from Vibrio cholerae serotype O1 (strain ATCC 39541 / Classical Ogawa 395 / O395).